Here is a 334-residue protein sequence, read N- to C-terminus: 2,3-bisphosphoglycerate-dependent phosphoglycerate mutase 1 (334 aa).

Residues 1–48 constitute a chloroplast transit peptide; that stretch reads MATATSHQSVVSFASLRSSPSSTISQCGFKIDSSLSFTSKKTNFCKIK. Substrate is bound by residues 84 to 91, 97 to 98, R134, 188 to 191, K199, 215 to 216, and 259 to 260; these read RHGESLWN, TG, ERMY, RR, and GN. Catalysis depends on H85, which acts as the Tele-phosphohistidine intermediate. E188 serves as the catalytic Proton donor/acceptor.

This sequence belongs to the phosphoglycerate mutase family. BPG-dependent PGAM subfamily.

The protein resides in the plastid. Its subcellular location is the chloroplast. The catalysed reaction is (2R)-2-phosphoglycerate = (2R)-3-phosphoglycerate. Its pathway is carbohydrate degradation; glycolysis; pyruvate from D-glyceraldehyde 3-phosphate: step 3/5. Catalyzes the interconversion of 2-phosphoglycerate and 3-phosphoglycerate. The sequence is that of 2,3-bisphosphoglycerate-dependent phosphoglycerate mutase 1 from Arabidopsis thaliana (Mouse-ear cress).